The chain runs to 171 residues: SPbeta prophage-derived uncharacterized protein YokC (171 aa).

The sequence is that of SPbeta prophage-derived uncharacterized protein YokC (yokC) from Bacillus subtilis (strain 168).